A 1371-amino-acid chain; its full sequence is DNA-directed RNA polymerase subunit beta'' (1371 aa).

Cysteine 220, cysteine 293, cysteine 300, and cysteine 303 together coordinate Zn(2+).

This sequence belongs to the RNA polymerase beta' chain family. RpoC2 subfamily. In terms of assembly, in plastids the minimal PEP RNA polymerase catalytic core is composed of four subunits: alpha, beta, beta', and beta''. When a (nuclear-encoded) sigma factor is associated with the core the holoenzyme is formed, which can initiate transcription. Zn(2+) is required as a cofactor.

The protein localises to the plastid. The protein resides in the chloroplast. It carries out the reaction RNA(n) + a ribonucleoside 5'-triphosphate = RNA(n+1) + diphosphate. Its function is as follows. DNA-dependent RNA polymerase catalyzes the transcription of DNA into RNA using the four ribonucleoside triphosphates as substrates. The sequence is that of DNA-directed RNA polymerase subunit beta'' from Lobularia maritima (Sweet alyssum).